We begin with the raw amino-acid sequence, 376 residues long: MAKNYDSVEFPYCDEVSKYERLAKIGQGTFGEVFKAKHRQTGKKVALKKVLMENEKEGFPITALREIKILQLLKHENVVNLIEICRTKVSPTANQYNRCKGTIFLVFDFCEHDLAGLLSNAHVKFTLSEIKKVMQMLLNGLYYIHRNKILHRDMKAANVLITRDGVLKLADFGLARAFSLAKNSQPNKYTNRVVTLWYRPPELLLGERDYGPPIDLWGAGCIMAEMWTRSPIMQGNTEQHQLTLISQLCGSITPEVWPNVDKYELYQKLELPKGQKRKVKDRLKAYVKDPHALDLIDKLLVLDPTQRLDSDDALNNDFFWSDPMPSDLKNMLSTHNQSMFEYLAPPRRRGGHMPQQPANQARNPAATNQSEFERVF.

The Protein kinase domain occupies 19 to 319 (YERLAKIGQG…SDDALNNDFF (301 aa)). Residues 25-33 (IGQGTFGEV) and Lys48 each bind ATP. Asp153 functions as the Proton acceptor in the catalytic mechanism. The tract at residues 345 to 376 (PPRRRGGHMPQQPANQARNPAATNQSEFERVF) is disordered. Residues 354–369 (PQQPANQARNPAATNQ) show a composition bias toward low complexity.

This sequence belongs to the protein kinase superfamily. CMGC Ser/Thr protein kinase family. CDC2/CDKX subfamily. As to quaternary structure, associates with cyclin-T to form P-TEFb.

The protein resides in the nucleus. It catalyses the reaction L-seryl-[protein] + ATP = O-phospho-L-seryl-[protein] + ADP + H(+). It carries out the reaction L-threonyl-[protein] + ATP = O-phospho-L-threonyl-[protein] + ADP + H(+). The enzyme catalyses [DNA-directed RNA polymerase] + ATP = phospho-[DNA-directed RNA polymerase] + ADP + H(+). Its function is as follows. Member of the cyclin-dependent kinase pair (CDK9/cyclin-T) complex, also called positive transcription elongation factor B (P-TEFb), which is proposed to facilitate the transition from abortive to production elongation by phosphorylating the CTD (C-terminal domain) of the large subunit of RNA polymerase II (RNAP II) and SUPT5H. This chain is Cyclin-dependent kinase 9-A (cdk9-a), found in Xenopus laevis (African clawed frog).